A 323-amino-acid polypeptide reads, in one-letter code: Olfactory receptor 1E2 (323 aa).

The Extracellular segment spans residues 1-25 (MMGQNQTSISDFLLLGLPIQPEQQN). N5 carries N-linked (GlcNAc...) asparagine glycosylation. A helical transmembrane segment spans residues 26–49 (LCYALFLAMYLTTLLGNLLIIVLI). The Cytoplasmic segment spans residues 50 to 57 (RLDSHLHT). The helical transmembrane segment at 58 to 79 (PVYLFLSNLSFSDLCFSSVTMP) threads the bilayer. Residues 80 to 100 (KLLQNMQNQDPSIPYADCLTQ) lie on the Extracellular side of the membrane. A disulfide bond links C97 and C198. The chain crosses the membrane as a helical span at residues 101–120 (MYFFLYFSDLESFLLVAMAY). Residues 121 to 148 (DRYVAICFPMHYTAICFLLHYTAIMSPM) are Cytoplasmic-facing. The helical transmembrane segment at 149-167 (LCLSVVALSWVLTTFHAML) threads the bilayer. Residues 168–205 (HTLLMARLCFCADNVIPHFFCDMSALLKLACSDTRVNE) lie on the Extracellular side of the membrane. Residues 206–228 (WVIFIMGGLILVIPFLLILGSYA) traverse the membrane as a helical segment. Over 229 to 245 (RIVSSILKVPSSKGICK) the chain is Cytoplasmic. Residues 246 to 269 (AFSTCGSHLSVVSLFYGTVIGLYL) traverse the membrane as a helical segment. The Extracellular portion of the chain corresponds to 270 to 281 (CPSANSSTLKDT). N274 carries an N-linked (GlcNAc...) asparagine glycan. The chain crosses the membrane as a helical span at residues 282–301 (VMAMMYTVVTPMLTPFIYSL). At 302–323 (RNRDMKGALERVICKRKNPFLL) the chain is on the cytoplasmic side.

This sequence belongs to the G-protein coupled receptor 1 family.

The protein resides in the cell membrane. In terms of biological role, odorant receptor. The sequence is that of Olfactory receptor 1E2 (OR1E2) from Homo sapiens (Human).